A 603-amino-acid polypeptide reads, in one-letter code: MAATDNRKVVEGVHKMTPSEAFVETCVANGVSEMFGIMGSAFMDAMDIFAPAGIRLIPVVHEQGAAHMADGYARVSGRHGVVIGQNGPGISNCVTGIAAAYWAHSPVVIVTPETGTMGMGLGGFQEANQLPMFQEFTKYQGHVCNPKRMAEFTGRVFDRAMSEMGPTQLNIPRDYFYGEIECEIPKPMRVDRGHGGEASLQAAVELLKTAKFPVILAGGGVVMGDAVEEAKQLAERLGAPVATGYLRNDAFPAKHPLWAGPLGYQGSKAAMKLIAQADVVIALGSRMGPFGTLPQHGMDYWPKAAKIIQIEADHTNLGLVKKIAVGINGDAKAVAAELSRRLADVTLGCDATKAARADTIATEKAAWEKELDGWTHERDPYSLDMIEEAKGERTPTGGSYLHPRQVLRELEKAMPARVMVSTDIGNINSVANSYLRFDEPRSFFAPMSFGNCGYALPTIIGAKCAAPDRPAIAYAGDGAWGMSMMEIMTAVRHDIPVTAVVFHNRQWGAEKKNQVDFYNRRFVAGELESESFSDIAKAMGAEGIVVDHIEDVGPALQKAIDMQMKEGKTCVIEIMCTRELGDPFRRDALSKPVRMLDKYKDYV.

Belongs to the TPP enzyme family. As to quaternary structure, homodimer or homotetramer. Mg(2+) is required as a cofactor. It depends on thiamine diphosphate as a cofactor.

It is found in the cytoplasm. The catalysed reaction is acetyl phosphate + sulfite + H(+) = sulfoacetaldehyde + phosphate. The protein operates within organosulfur degradation; taurine degradation via aerobic pathway; acetyl phosphate and sulfite from taurine: step 2/2. This is Sulfoacetaldehyde acetyltransferase (xsc) from Alcaligenes xylosoxydans xylosoxydans (Achromobacter xylosoxidans).